The sequence spans 287 residues: Protease HtpX (287 aa).

2 consecutive transmembrane segments (helical) span residues 4 to 24 and 33 to 53; these read IFLLIATNMAILLVASIVMSI and GGLLVFAAIFGFGGAFISLAI. H139 provides a ligand contact to Zn(2+). The active site involves E140. H143 serves as a coordination point for Zn(2+). The next 2 helical transmembrane spans lie at 154-174 and 195-215; these read LIQGVVNTFVIFAARVVAGII and AVVFVLDMLFGILASMIVAYF. E220 is a Zn(2+) binding site.

It belongs to the peptidase M48B family. Zn(2+) serves as cofactor.

The protein localises to the cell inner membrane. In Shewanella pealeana (strain ATCC 700345 / ANG-SQ1), this protein is Protease HtpX.